The primary structure comprises 478 residues: Histidine--tRNA ligase (478 aa).

It belongs to the class-II aminoacyl-tRNA synthetase family. Homodimer.

Its subcellular location is the cytoplasm. The catalysed reaction is tRNA(His) + L-histidine + ATP = L-histidyl-tRNA(His) + AMP + diphosphate + H(+). The chain is Histidine--tRNA ligase (hisS) from Xanthomonas axonopodis pv. citri (strain 306).